Here is a 558-residue protein sequence, read N- to C-terminus: 2-isopropylmalate synthase (558 aa).

The region spanning 30 to 303 (PIWCSVDLRD…DPKLDFSNIP (274 aa)) is the Pyruvate carboxyltransferase domain. Mg(2+) is bound by residues D39, H242, H244, and N278. Residues 438–558 (LNNTLCVQDF…GLVSALNRII (121 aa)) are regulatory domain.

The protein belongs to the alpha-IPM synthase/homocitrate synthase family. LeuA type 2 subfamily. In terms of assembly, homodimer. Mg(2+) is required as a cofactor.

It is found in the cytoplasm. It carries out the reaction 3-methyl-2-oxobutanoate + acetyl-CoA + H2O = (2S)-2-isopropylmalate + CoA + H(+). It participates in amino-acid biosynthesis; L-leucine biosynthesis; L-leucine from 3-methyl-2-oxobutanoate: step 1/4. Its function is as follows. Catalyzes the condensation of the acetyl group of acetyl-CoA with 3-methyl-2-oxobutanoate (2-ketoisovalerate) to form 3-carboxy-3-hydroxy-4-methylpentanoate (2-isopropylmalate). The sequence is that of 2-isopropylmalate synthase from Helicobacter hepaticus (strain ATCC 51449 / 3B1).